We begin with the raw amino-acid sequence, 322 residues long: Probable L-asparaginase (322 aa).

The region spanning 6–320 is the Asparaginase/glutaminase domain; sequence PRLALIHTGG…EDIRRVFTQG (315 aa). Residues 13–37 are disordered; the sequence is TGGTIASRPSPDGRGLTPQTPPALP. The O-isoaspartyl threonine intermediate role is filled by threonine 16. Residues serine 54 and 85–86 each bind substrate; that span reads TD.

This sequence belongs to the asparaginase 1 family.

The protein resides in the cytoplasm. The catalysed reaction is L-asparagine + H2O = L-aspartate + NH4(+). The chain is Probable L-asparaginase (ansA) from Deinococcus radiodurans (strain ATCC 13939 / DSM 20539 / JCM 16871 / CCUG 27074 / LMG 4051 / NBRC 15346 / NCIMB 9279 / VKM B-1422 / R1).